The chain runs to 322 residues: Peroxidase 66 (322 aa).

A signal peptide spans M1–A24. 2 disulfide bridges follow: C35–C114 and C68–C73. H66 acts as the Proton acceptor in catalysis. Ca(2+) contacts are provided by D67, G72, D74, and S76. N-linked (GlcNAc...) asparagine glycosylation is present at N155. P161 is a substrate binding site. N166 carries an N-linked (GlcNAc...) asparagine glycan. Residue H191 participates in heme b binding. T192 lines the Ca(2+) pocket. Residues C198 and C230 are joined by a disulfide bond. N207 is a glycosylation site (N-linked (GlcNAc...) asparagine). Ca(2+)-binding residues include D245, T247, and D252.

The protein belongs to the peroxidase family. Classical plant (class III) peroxidase subfamily. The cofactor is heme b. Requires Ca(2+) as cofactor.

Its subcellular location is the secreted. The catalysed reaction is 2 a phenolic donor + H2O2 = 2 a phenolic radical donor + 2 H2O. Its function is as follows. Removal of H(2)O(2), oxidation of toxic reductants, biosynthesis and degradation of lignin, suberization, auxin catabolism, response to environmental stresses such as wounding, pathogen attack and oxidative stress. These functions might be dependent on each isozyme/isoform in each plant tissue. This is Peroxidase 66 (PER66) from Arabidopsis thaliana (Mouse-ear cress).